Reading from the N-terminus, the 779-residue chain is Phosphoribosylformylglycinamidine synthase subunit PurL (779 aa).

Residue histidine 52 is part of the active site. Residues tyrosine 55 and lysine 94 each contribute to the ATP site. Residue glutamate 96 participates in Mg(2+) binding. Residues 97 to 100 (SHNH) and arginine 119 contribute to the substrate site. Histidine 98 (proton acceptor) is an active-site residue. Mg(2+) is bound at residue aspartate 120. Glutamine 243 contributes to the substrate binding site. Aspartate 271 is a binding site for Mg(2+). 315–317 (ESQ) is a substrate binding site. The ATP site is built by asparagine 523 and glycine 560. Residue asparagine 561 coordinates Mg(2+). Serine 563 contacts substrate.

This sequence belongs to the FGAMS family. Monomer. Part of the FGAM synthase complex composed of 1 PurL, 1 PurQ and 2 PurS subunits.

Its subcellular location is the cytoplasm. It catalyses the reaction N(2)-formyl-N(1)-(5-phospho-beta-D-ribosyl)glycinamide + L-glutamine + ATP + H2O = 2-formamido-N(1)-(5-O-phospho-beta-D-ribosyl)acetamidine + L-glutamate + ADP + phosphate + H(+). Its pathway is purine metabolism; IMP biosynthesis via de novo pathway; 5-amino-1-(5-phospho-D-ribosyl)imidazole from N(2)-formyl-N(1)-(5-phospho-D-ribosyl)glycinamide: step 1/2. Its function is as follows. Part of the phosphoribosylformylglycinamidine synthase complex involved in the purines biosynthetic pathway. Catalyzes the ATP-dependent conversion of formylglycinamide ribonucleotide (FGAR) and glutamine to yield formylglycinamidine ribonucleotide (FGAM) and glutamate. The FGAM synthase complex is composed of three subunits. PurQ produces an ammonia molecule by converting glutamine to glutamate. PurL transfers the ammonia molecule to FGAR to form FGAM in an ATP-dependent manner. PurS interacts with PurQ and PurL and is thought to assist in the transfer of the ammonia molecule from PurQ to PurL. This is Phosphoribosylformylglycinamidine synthase subunit PurL from Prochlorococcus marinus (strain MIT 9301).